Reading from the N-terminus, the 495-residue chain is UDP-glycosyltransferase 73C10 (495 aa).

His-24 acts as the Proton acceptor in catalysis. His-24 contacts an anthocyanidin. The Charge relay role is filled by Asp-129. UDP-alpha-D-glucose-binding residues include Gln-358, His-373, Trp-376, Asn-377, Ser-378, and Glu-381. Gly-396 contacts an anthocyanidin. Positions 397 and 398 each coordinate UDP-alpha-D-glucose.

Belongs to the UDP-glycosyltransferase family.

It carries out the reaction oleanolate + UDP-alpha-D-glucose = oleanolate 3-O-beta-D-glucoside + UDP + H(+). Catalyzes the transfer of a glucose (Glc) moiety from UDP-Glc to the C-3 position of the oleanane sapogenins oleanolate and hederagenin, and to the C-28 carboxylic group of the lupane sapogenin betulinate. The monoglucosylated hederagenin 3-O-beta-D-glucoside is a feeding deterrent of the yellow-striped flea beetle (Phyllotreta nemorum). In Barbarea vulgaris (Yellow rocket), this protein is UDP-glycosyltransferase 73C10.